We begin with the raw amino-acid sequence, 432 residues long: Glutamate-1-semialdehyde 2,1-aminomutase (432 aa).

Lysine 270 carries the post-translational modification N6-(pyridoxal phosphate)lysine.

Belongs to the class-III pyridoxal-phosphate-dependent aminotransferase family. HemL subfamily. Homodimer. Requires pyridoxal 5'-phosphate as cofactor.

Its subcellular location is the cytoplasm. It carries out the reaction (S)-4-amino-5-oxopentanoate = 5-aminolevulinate. It functions in the pathway porphyrin-containing compound metabolism; protoporphyrin-IX biosynthesis; 5-aminolevulinate from L-glutamyl-tRNA(Glu): step 2/2. This Acinetobacter baumannii (strain ATCC 17978 / DSM 105126 / CIP 53.77 / LMG 1025 / NCDC KC755 / 5377) protein is Glutamate-1-semialdehyde 2,1-aminomutase.